A 100-amino-acid polypeptide reads, in one-letter code: Small ribosomal subunit protein bS6 (100 aa).

This sequence belongs to the bacterial ribosomal protein bS6 family.

In terms of biological role, binds together with bS18 to 16S ribosomal RNA. The polypeptide is Small ribosomal subunit protein bS6 (Tropheryma whipplei (strain TW08/27) (Whipple's bacillus)).